Reading from the N-terminus, the 311-residue chain is Ribonuclease Z (311 aa).

The Zn(2+) site is built by H63, H65, D67, H68, H141, D212, and H270. D67 acts as the Proton acceptor in catalysis.

It belongs to the RNase Z family. Homodimer. The cofactor is Zn(2+).

The catalysed reaction is Endonucleolytic cleavage of RNA, removing extra 3' nucleotides from tRNA precursor, generating 3' termini of tRNAs. A 3'-hydroxy group is left at the tRNA terminus and a 5'-phosphoryl group is left at the trailer molecule.. In terms of biological role, zinc phosphodiesterase, which displays some tRNA 3'-processing endonuclease activity. Probably involved in tRNA maturation, by removing a 3'-trailer from precursor tRNA. The protein is Ribonuclease Z of Lactiplantibacillus plantarum (strain ATCC BAA-793 / NCIMB 8826 / WCFS1) (Lactobacillus plantarum).